A 546-amino-acid chain; its full sequence is Phosphomethylpyrimidine synthase (546 aa).

Residues Asn145, Met174, Tyr203, His239, Ser259–Gly261, Asp300–Arg303, and Glu339 each bind substrate. His343 provides a ligand contact to Zn(2+). A substrate-binding site is contributed by Tyr366. His407 contacts Zn(2+). Residues Cys487, Cys490, and Cys495 each coordinate [4Fe-4S] cluster.

The protein belongs to the ThiC family. It depends on [4Fe-4S] cluster as a cofactor.

The catalysed reaction is 5-amino-1-(5-phospho-beta-D-ribosyl)imidazole + S-adenosyl-L-methionine = 4-amino-2-methyl-5-(phosphooxymethyl)pyrimidine + CO + 5'-deoxyadenosine + formate + L-methionine + 3 H(+). It participates in cofactor biosynthesis; thiamine diphosphate biosynthesis. Catalyzes the synthesis of the hydroxymethylpyrimidine phosphate (HMP-P) moiety of thiamine from aminoimidazole ribotide (AIR) in a radical S-adenosyl-L-methionine (SAM)-dependent reaction. The protein is Phosphomethylpyrimidine synthase of Mycobacterium marinum (strain ATCC BAA-535 / M).